Consider the following 405-residue polypeptide: L-carnitine CoA-transferase (405 aa).

Residues Lys-97 and Arg-104 each coordinate CoA. The active-site Nucleophile is the Asp-169.

It belongs to the CoA-transferase III family. CaiB subfamily. Homodimer.

Its subcellular location is the cytoplasm. The enzyme catalyses crotonobetainyl-CoA + (R)-carnitine = crotonobetaine + (R)-carnitinyl-CoA. It catalyses the reaction 4-(trimethylamino)butanoyl-CoA + (R)-carnitine = (R)-carnitinyl-CoA + 4-(trimethylamino)butanoate. It functions in the pathway amine and polyamine metabolism; carnitine metabolism. Catalyzes the reversible transfer of the CoA moiety from gamma-butyrobetainyl-CoA to L-carnitine to generate L-carnitinyl-CoA and gamma-butyrobetaine. Is also able to catalyze the reversible transfer of the CoA moiety from gamma-butyrobetainyl-CoA or L-carnitinyl-CoA to crotonobetaine to generate crotonobetainyl-CoA. The sequence is that of L-carnitine CoA-transferase from Escherichia coli O127:H6 (strain E2348/69 / EPEC).